A 458-amino-acid polypeptide reads, in one-letter code: Adenylosuccinate synthetase (458 aa).

GTP-binding positions include glycine 17–lysine 23 and glycine 45–threonine 47. Aspartate 18 (proton acceptor) is an active-site residue. Mg(2+) is bound by residues aspartate 18 and glycine 45. IMP is bound by residues aspartate 18–lysine 21, asparagine 43–histidine 46, threonine 137, arginine 151, glutamine 247, threonine 262, and arginine 330. Histidine 46 serves as the catalytic Proton donor. Valine 326–arginine 332 serves as a coordination point for substrate. Residues arginine 332, lysine 358 to aspartate 360, and serine 440 to glycine 442 each bind GTP.

This sequence belongs to the adenylosuccinate synthetase family. Homodimer. Mg(2+) serves as cofactor.

The protein localises to the cytoplasm. It catalyses the reaction IMP + L-aspartate + GTP = N(6)-(1,2-dicarboxyethyl)-AMP + GDP + phosphate + 2 H(+). It functions in the pathway purine metabolism; AMP biosynthesis via de novo pathway; AMP from IMP: step 1/2. In terms of biological role, plays an important role in the de novo pathway of purine nucleotide biosynthesis. Catalyzes the first committed step in the biosynthesis of AMP from IMP. In Albidiferax ferrireducens (strain ATCC BAA-621 / DSM 15236 / T118) (Rhodoferax ferrireducens), this protein is Adenylosuccinate synthetase.